Consider the following 160-residue polypeptide: UPF0262 protein Mrad2831_3513 (160 aa).

Belongs to the UPF0262 family.

The chain is UPF0262 protein Mrad2831_3513 from Methylobacterium radiotolerans (strain ATCC 27329 / DSM 1819 / JCM 2831 / NBRC 15690 / NCIMB 10815 / 0-1).